The primary structure comprises 341 residues: Glycerol-3-phosphate dehydrogenase [NAD(P)+] (341 aa).

NADPH contacts are provided by serine 14, phenylalanine 15, arginine 35, and lysine 108. Sn-glycerol 3-phosphate is bound by residues lysine 108 and glycine 136. Alanine 140 contributes to the NADPH binding site. Sn-glycerol 3-phosphate-binding residues include lysine 191, aspartate 244, serine 254, arginine 255, and asparagine 256. Residue lysine 191 is the Proton acceptor of the active site. Residue arginine 255 coordinates NADPH. NADPH is bound by residues valine 279 and glutamate 281.

This sequence belongs to the NAD-dependent glycerol-3-phosphate dehydrogenase family.

The protein localises to the cytoplasm. It carries out the reaction sn-glycerol 3-phosphate + NAD(+) = dihydroxyacetone phosphate + NADH + H(+). The enzyme catalyses sn-glycerol 3-phosphate + NADP(+) = dihydroxyacetone phosphate + NADPH + H(+). It participates in membrane lipid metabolism; glycerophospholipid metabolism. Catalyzes the reduction of the glycolytic intermediate dihydroxyacetone phosphate (DHAP) to sn-glycerol 3-phosphate (G3P), the key precursor for phospholipid synthesis. The polypeptide is Glycerol-3-phosphate dehydrogenase [NAD(P)+] (Pseudomonas syringae pv. syringae (strain B728a)).